A 213-amino-acid polypeptide reads, in one-letter code: 3-isopropylmalate dehydratase small subunit (213 aa).

This sequence belongs to the LeuD family. LeuD type 1 subfamily. As to quaternary structure, heterodimer of LeuC and LeuD.

The enzyme catalyses (2R,3S)-3-isopropylmalate = (2S)-2-isopropylmalate. It participates in amino-acid biosynthesis; L-leucine biosynthesis; L-leucine from 3-methyl-2-oxobutanoate: step 2/4. Its function is as follows. Catalyzes the isomerization between 2-isopropylmalate and 3-isopropylmalate, via the formation of 2-isopropylmaleate. This is 3-isopropylmalate dehydratase small subunit from Neisseria gonorrhoeae (strain ATCC 700825 / FA 1090).